A 1177-amino-acid chain; its full sequence is DNA-directed RNA polymerase subunit beta (1177 aa).

The segment covering 1147–1161 (DDTEIEMRDTEDDDD) has biased composition (acidic residues). The tract at residues 1147–1177 (DDTEIEMRDTEDDDDHQSADKLNVEVETTKE) is disordered. Basic and acidic residues predominate over residues 1162–1177 (HQSADKLNVEVETTKE).

The protein belongs to the RNA polymerase beta chain family. As to quaternary structure, the RNAP catalytic core consists of 2 alpha, 1 beta, 1 beta' and 1 omega subunit. When a sigma factor is associated with the core the holoenzyme is formed, which can initiate transcription.

The enzyme catalyses RNA(n) + a ribonucleoside 5'-triphosphate = RNA(n+1) + diphosphate. In terms of biological role, DNA-dependent RNA polymerase catalyzes the transcription of DNA into RNA using the four ribonucleoside triphosphates as substrates. The polypeptide is DNA-directed RNA polymerase subunit beta (Bacillus cereus (strain G9842)).